A 329-amino-acid polypeptide reads, in one-letter code: Dapdiamide synthesis protein DdaC (329 aa).

Requires Fe(2+) as cofactor.

It participates in antibiotic biosynthesis. Its function is as follows. Involved in dapdiamide antibiotics biosynthesis. Catalyzes the alpha-ketoglutarate-dependent epoxidation of the covalently bound N-beta-fumaramoyl-DAP-S-DdaD to generate N-beta-epoxysuccinamoyl-DAP in thioester linkage to DdaD. This Enterobacter agglomerans (Erwinia herbicola) protein is Dapdiamide synthesis protein DdaC.